The chain runs to 238 residues: 1-(5-phosphoribosyl)-5-[(5-phosphoribosylamino)methylideneamino] imidazole-4-carboxamide isomerase (238 aa).

The active-site Proton acceptor is D8. D129 (proton donor) is an active-site residue.

The protein belongs to the HisA/HisF family.

The protein resides in the cytoplasm. It carries out the reaction 1-(5-phospho-beta-D-ribosyl)-5-[(5-phospho-beta-D-ribosylamino)methylideneamino]imidazole-4-carboxamide = 5-[(5-phospho-1-deoxy-D-ribulos-1-ylimino)methylamino]-1-(5-phospho-beta-D-ribosyl)imidazole-4-carboxamide. It participates in amino-acid biosynthesis; L-histidine biosynthesis; L-histidine from 5-phospho-alpha-D-ribose 1-diphosphate: step 4/9. This chain is 1-(5-phosphoribosyl)-5-[(5-phosphoribosylamino)methylideneamino] imidazole-4-carboxamide isomerase, found in Jannaschia sp. (strain CCS1).